A 495-amino-acid polypeptide reads, in one-letter code: Cytoplasmic alpha-amylase (495 aa).

2 residues coordinate Ca(2+): N104 and D198. The Nucleophile role is filled by D235. A Ca(2+)-binding site is contributed by H239. Residue E265 is the Proton donor of the active site.

This sequence belongs to the glycosyl hydrolase 13 family. In terms of assembly, monomer. Ca(2+) serves as cofactor.

Its subcellular location is the cytoplasm. The catalysed reaction is Endohydrolysis of (1-&gt;4)-alpha-D-glucosidic linkages in polysaccharides containing three or more (1-&gt;4)-alpha-linked D-glucose units.. The polypeptide is Cytoplasmic alpha-amylase (amyA) (Escherichia coli (strain K12)).